The following is a 285-amino-acid chain: Probable endonuclease 4 (285 aa).

Zn(2+) contacts are provided by His69, His109, Glu145, Asp179, His182, His216, Asp229, His231, and Glu261.

The protein belongs to the AP endonuclease 2 family. Zn(2+) is required as a cofactor.

The catalysed reaction is Endonucleolytic cleavage to 5'-phosphooligonucleotide end-products.. Endonuclease IV plays a role in DNA repair. It cleaves phosphodiester bonds at apurinic or apyrimidinic (AP) sites, generating a 3'-hydroxyl group and a 5'-terminal sugar phosphate. The protein is Probable endonuclease 4 of Salmonella heidelberg (strain SL476).